A 711-amino-acid chain; its full sequence is Polyribonucleotide nucleotidyltransferase (711 aa).

Mg(2+)-binding residues include Asp486 and Asp492. In terms of domain architecture, KH spans 553–612 (PRIHTIKINPDKIKDVIGKGGSVIRALTEETGTTIEIEDDGTVKIAATDGEKAKHAIRRI). The S1 motif domain maps to 622–690 (GRVYTGKVTR…RQGRIRLSIK (69 aa)). The tract at residues 689–711 (IKEATEQSQPAAAPEAPAAEQGE) is disordered. The span at 694–711 (EQSQPAAAPEAPAAEQGE) shows a compositional bias: low complexity.

This sequence belongs to the polyribonucleotide nucleotidyltransferase family. Component of the RNA degradosome, which is a multiprotein complex involved in RNA processing and mRNA degradation. Requires Mg(2+) as cofactor.

It localises to the cytoplasm. It catalyses the reaction RNA(n+1) + phosphate = RNA(n) + a ribonucleoside 5'-diphosphate. Involved in mRNA degradation. Catalyzes the phosphorolysis of single-stranded polyribonucleotides processively in the 3'- to 5'-direction. The protein is Polyribonucleotide nucleotidyltransferase of Shigella boydii serotype 4 (strain Sb227).